The primary structure comprises 120 residues: MSAVHENEARRRQRLRYQIRLKAHGRPRLSVFRSGKHIYAQVIDDAAGRTLAAASSLDAGLRSALKTGADKAAAAAVGKLVAERAKEAGVTQVVFDRGAYMYHGRVKALAEAARESGLDF.

This sequence belongs to the universal ribosomal protein uL18 family. In terms of assembly, part of the 50S ribosomal subunit; part of the 5S rRNA/L5/L18/L25 subcomplex. Contacts the 5S and 23S rRNAs.

This is one of the proteins that bind and probably mediate the attachment of the 5S RNA into the large ribosomal subunit, where it forms part of the central protuberance. The sequence is that of Large ribosomal subunit protein uL18 from Acidiphilium cryptum (strain JF-5).